The primary structure comprises 397 residues: MSDIIDSILSTLKKGRIFRSRDLLLPDYIPEALPHREDQIRKLVEILAPITRSEKPSNVFIYGLTGTGKTAVTRFVLSNLQRKFPSKFTFIYINTRQNDTPYRILADVLEALGIRVPFTGLSTAELFKRFVKRLNTFQTIVLITLDEIDALVKKHGDDILYRLTRINYDLSTSKVSVIGITNDVKMVENLDPRVKSSLGEEEIIFPPYNAEQLEDILKQRSKIALNEGVISEEVIKLCAALAARDHGDARRALDLLRVSGEIAEREGRDLITADDVNRARIELERDRVYEVISTLPFHSKLVLISIVLGLNSNSTLTTGEVYDIYIKLAGKLGVESITQRRVSDIINELDMVGIITARVVNRGRYGKTKEISLAVSKDIVIKSIKESDERIGSLWSR.

Residues 67 to 71, tyrosine 208, and arginine 220 contribute to the ATP site; that span reads TGKTA.

It belongs to the CDC6/cdc18 family.

Involved in regulation of DNA replication. This chain is ORC1-type DNA replication protein 1 (cdc6-1), found in Sulfolobus acidocaldarius (strain ATCC 33909 / DSM 639 / JCM 8929 / NBRC 15157 / NCIMB 11770).